Here is a 429-residue protein sequence, read N- to C-terminus: MLNYSKSEKAFKEAKKVLPGGVNSPVRAFNSVDATPVFMDHGKGAYITDIDGNEYIDYVLSWGPLILGHANPSVVDAITKAAMKGTSFGTPTEIETELAKLVIERVPSIEIVRMVSSGTEATMSAIRLARGYTKREKILKFEGSYHGHGDSLLIKAGSGVATLGLPDSPGVTKGLAADTITVPYNDVEGAKLAFEKYGEEIAAVIVEPVAGNMGVVPPIEGFLEGLRDLTTKYGALLIFDEVMTGFRVDYYSAQGYYVVTPDITCLGKVIGGGLPVGAYGGKKEIMEQIAPAGSIYQAGTLSGNPLAMNAGFETVRQLTPQHYDVFRSLIKRMEEGLTEISTRREVPISINKAGSMFGFFFTDQKVINFDTAKTSNLEFFRNYYREMLNQGIFLPPSQFEGVFISTMHTEKEIDKTLEAFDHTCKTLRG.

At Lys268 the chain carries N6-(pyridoxal phosphate)lysine.

The protein belongs to the class-III pyridoxal-phosphate-dependent aminotransferase family. HemL subfamily. Homodimer. Requires pyridoxal 5'-phosphate as cofactor.

Its subcellular location is the cytoplasm. The catalysed reaction is (S)-4-amino-5-oxopentanoate = 5-aminolevulinate. Its pathway is porphyrin-containing compound metabolism; protoporphyrin-IX biosynthesis; 5-aminolevulinate from L-glutamyl-tRNA(Glu): step 2/2. The sequence is that of Glutamate-1-semialdehyde 2,1-aminomutase 1 from Listeria welshimeri serovar 6b (strain ATCC 35897 / DSM 20650 / CCUG 15529 / CIP 8149 / NCTC 11857 / SLCC 5334 / V8).